The sequence spans 76 residues: Large ribosomal subunit protein uL29 (76 aa).

Belongs to the universal ribosomal protein uL29 family.

The polypeptide is Large ribosomal subunit protein uL29 (Gloeothece citriformis (strain PCC 7424) (Cyanothece sp. (strain PCC 7424))).